The following is a 318-amino-acid chain: TPR repeat-containing protein MJ0940 (318 aa).

TPR repeat units follow at residues 17 to 50, 84 to 117, 119 to 151, 152 to 185, 186 to 219, 221 to 254, 255 to 288, and 289 to 318; these read SLTY…NPDF, PVAY…EEKF, TAFF…APNF, IPAY…KEND, TNAI…LNVT, IEVI…RPDD, ASLW…MPHH, and TKAL…ALDR.

The polypeptide is TPR repeat-containing protein MJ0940 (Methanocaldococcus jannaschii (strain ATCC 43067 / DSM 2661 / JAL-1 / JCM 10045 / NBRC 100440) (Methanococcus jannaschii)).